A 515-amino-acid chain; its full sequence is DNA-directed RNA polymerase subunit Rpo2N (515 aa).

The protein belongs to the RNA polymerase beta chain family. Part of the RNA polymerase complex.

Its subcellular location is the cytoplasm. It carries out the reaction RNA(n) + a ribonucleoside 5'-triphosphate = RNA(n+1) + diphosphate. DNA-dependent RNA polymerase (RNAP) catalyzes the transcription of DNA into RNA using the four ribonucleoside triphosphates as substrates. The Rpo2 subunit (Rpo2N and Rpo2C in this organism) is implicated in DNA promoter recognition and in nucleotide binding. The polypeptide is DNA-directed RNA polymerase subunit Rpo2N (Methanothermobacter thermautotrophicus (strain Winter) (Methanobacterium thermoautotrophicum)).